Reading from the N-terminus, the 185-residue chain is Ribonuclease HII (185 aa).

The RNase H type-2 domain maps to 1 to 185; that stretch reads MKICGIDEAG…LKHLQGILEF (185 aa). 3 residues coordinate a divalent metal cation: Asp-7, Glu-8, and Asp-96.

Belongs to the RNase HII family. The cofactor is Mn(2+). It depends on Mg(2+) as a cofactor.

It localises to the cytoplasm. The catalysed reaction is Endonucleolytic cleavage to 5'-phosphomonoester.. Its function is as follows. Endonuclease that specifically degrades the RNA of RNA-DNA hybrids. This is Ribonuclease HII from Campylobacter hominis (strain ATCC BAA-381 / DSM 21671 / CCUG 45161 / LMG 19568 / NCTC 13146 / CH001A).